Reading from the N-terminus, the 390-residue chain is Elongation factor Ts, mitochondrial (390 aa).

It belongs to the EF-Ts family.

It localises to the mitochondrion. Associates with the EF-Tu.GDP complex and induces the exchange of GDP to GTP. It remains bound to the aminoacyl-tRNA.EF-Tu.GTP complex up to the GTP hydrolysis stage on the ribosome. This chain is Elongation factor Ts, mitochondrial, found in Plasmodium falciparum (isolate 3D7).